Reading from the N-terminus, the 115-residue chain is Pro-neuregulin-4, membrane-bound isoform (115 aa).

The Extracellular segment spans residues 1–62 (MPTDHEQPCG…SSIPSESNLS (62 aa)). One can recognise an EGF-like domain in the interval 5–46 (HEQPCGPRHRSFCLNGGICYVIPTIPSPFCRCIENYTGARCE). 3 cysteine pairs are disulfide-bonded: Cys9-Cys23, Cys17-Cys34, and Cys36-Cys45. N-linked (GlcNAc...) asparagine glycans are attached at residues Asn39 and Asn60. Residues 63-83 (AAFVVLAVLLTLTIAALCFLC) traverse the membrane as a helical segment. Over 84-115 (RKGHLQRASSVQCEISLVETNNTRTRHSHREH) the chain is Cytoplasmic.

This sequence belongs to the neuregulin family. In terms of assembly, interacts with ERBB4. In terms of processing, proteolytic cleavage close to the plasma membrane on the external face leads to the release of the soluble growth factor form. Post-translationally, extensive glycosylation precedes the proteolytic cleavage. In terms of tissue distribution, highly expressed in pancreas; weakly expressed in muscle.

It localises to the cell membrane. Its subcellular location is the secreted. Its function is as follows. Low affinity ligand for the ERBB4 tyrosine kinase receptor. Concomitantly recruits ERBB1 and ERBB2 coreceptors, resulting in ligand-stimulated tyrosine phosphorylation and activation of the ERBB receptors. Does not bind to the ERBB1, ERBB2 and ERBB3 receptors. In Mus musculus (Mouse), this protein is Pro-neuregulin-4, membrane-bound isoform (Nrg4).